A 362-amino-acid chain; its full sequence is Zinc phosphodiesterase ELAC protein 1 (362 aa).

7 residues coordinate Zn(2+): histidine 62, histidine 64, aspartate 66, histidine 67, histidine 181, aspartate 252, and histidine 312. The active-site Proton acceptor is the aspartate 66.

It belongs to the RNase Z family. Homodimer. Zn(2+) serves as cofactor.

It is found in the cytoplasm. The protein localises to the cytosol. The protein resides in the nucleus. The catalysed reaction is Endonucleolytic cleavage of RNA, removing extra 3' nucleotides from tRNA precursor, generating 3' termini of tRNAs. A 3'-hydroxy group is left at the tRNA terminus and a 5'-phosphoryl group is left at the trailer molecule.. Zinc phosphodiesterase, which displays some tRNA 3'-processing endonuclease activity. Specifically involved in tRNA repair: acts downstream of the ribosome-associated quality control (RQC) pathway by removing a 2',3'-cyclic phosphate from tRNAs following cleavage by ANKZF1. tRNAs are then processed by TRNT1. The chain is Zinc phosphodiesterase ELAC protein 1 (Elac1) from Mus musculus (Mouse).